The sequence spans 65 residues: Conotoxin VnMLCL-031 (65 aa).

Positions 1 to 19 are cleaved as a signal peptide; sequence MLCLPXFIILLLLASPAAP. Residues 20–43 constitute a propeptide that is removed on maturation; that stretch reads NPLQTRXQSNLIRAGPEDANIKTX. Isoleucine amide is present on isoleucine 64.

Belongs to the conotoxin T superfamily. In terms of tissue distribution, expressed by the venom duct.

Its subcellular location is the secreted. This is Conotoxin VnMLCL-031 from Conus ventricosus (Mediterranean cone).